Here is a 456-residue protein sequence, read N- to C-terminus: Zinc finger protein 25 (456 aa).

Residues 8-79 enclose the KRAB domain; sequence VTLKDVIVEF…EVEFPHRGFP (72 aa). C2H2-type zinc fingers lie at residues 118–140, 146–168, 174–196, 202–224, 230–252, 258–280, 286–308, 314–336, 342–364, 370–392, 398–420, and 426–448; these read CECK…QHTH, YDCD…QKIH, YECK…LRTH, YECN…QKTH, FECT…QKTH, YECK…QRMH, YKCK…QRSH, YECK…QRTH, FECN…QRKH, YECT…QRTH, YACK…QRKH, and YECQ…QKTH.

This sequence belongs to the krueppel C2H2-type zinc-finger protein family.

The protein resides in the nucleus. In terms of biological role, may be involved in transcriptional regulation. In Homo sapiens (Human), this protein is Zinc finger protein 25 (ZNF25).